A 428-amino-acid chain; its full sequence is Trigger factor (428 aa).

A PPIase FKBP-type domain is found at 165–240 (ADLIKLDAEG…VKEVKRMELP (76 aa)).

The protein belongs to the FKBP-type PPIase family. Tig subfamily.

It is found in the cytoplasm. The catalysed reaction is [protein]-peptidylproline (omega=180) = [protein]-peptidylproline (omega=0). Functionally, involved in protein export. Acts as a chaperone by maintaining the newly synthesized protein in an open conformation. Functions as a peptidyl-prolyl cis-trans isomerase. The sequence is that of Trigger factor from Prosthecochloris aestuarii (strain DSM 271 / SK 413).